The chain runs to 312 residues: Telomere-binding protein OPG077 (312 aa).

Belongs to the orthopoxvirus OPG077 family.

It localises to the virion. In terms of biological role, DNA-binding protein which binds to the hairpin form of the viral telomeric sequence. Required for the production of mature virions (MV). In Rabbitpox virus (strain Utrecht) (RPV), this protein is Telomere-binding protein OPG077 (OPG077).